A 60-amino-acid chain; its full sequence is DNA gyrase inhibitor YacG (60 aa).

Zn(2+)-binding residues include Cys-15, Cys-18, Cys-30, and Cys-34.

Belongs to the DNA gyrase inhibitor YacG family. As to quaternary structure, interacts with GyrB. The cofactor is Zn(2+).

Inhibits all the catalytic activities of DNA gyrase by preventing its interaction with DNA. Acts by binding directly to the C-terminal domain of GyrB, which probably disrupts DNA binding by the gyrase. The polypeptide is DNA gyrase inhibitor YacG (Bradyrhizobium diazoefficiens (strain JCM 10833 / BCRC 13528 / IAM 13628 / NBRC 14792 / USDA 110)).